Reading from the N-terminus, the 218-residue chain is 3,4-dihydroxy-2-butanone 4-phosphate synthase (218 aa).

D-ribulose 5-phosphate is bound by residues 37 to 38 (RE), D42, 150 to 154 (RGGHT), and E174. E38 contributes to the Mg(2+) binding site. H153 is a binding site for Mg(2+).

It belongs to the DHBP synthase family. As to quaternary structure, homodimer. Mg(2+) serves as cofactor. Requires Mn(2+) as cofactor.

The enzyme catalyses D-ribulose 5-phosphate = (2S)-2-hydroxy-3-oxobutyl phosphate + formate + H(+). The protein operates within cofactor biosynthesis; riboflavin biosynthesis; 2-hydroxy-3-oxobutyl phosphate from D-ribulose 5-phosphate: step 1/1. In terms of biological role, catalyzes the conversion of D-ribulose 5-phosphate to formate and 3,4-dihydroxy-2-butanone 4-phosphate. This is 3,4-dihydroxy-2-butanone 4-phosphate synthase from Erwinia tasmaniensis (strain DSM 17950 / CFBP 7177 / CIP 109463 / NCPPB 4357 / Et1/99).